The following is a 182-amino-acid chain: uncharacterized protein (182 aa).

BNR repeat units follow at residues 58–69 (WISFDAGENWET) and 102–113 (YITDDRGESWRA).

This is an uncharacterized protein from Saccharomyces cerevisiae (strain ATCC 204508 / S288c) (Baker's yeast).